The chain runs to 423 residues: Zinc finger and BTB domain-containing protein 6 (423 aa).

The 65-residue stretch at 33-97 (CDVSIYINDT…CYTGALEVKR (65 aa)) folds into the BTB domain. The residue at position 201 (S201) is a Phosphoserine. 4 C2H2-type zinc fingers span residues 300 to 322 (HQCPRCPRGFLHVENYLRHLKMH), 325 to 347 (FLCLQCGKTFTQKKNLNRHIRGH), 353 to 375 (FQCTVCLKTFTAKSTLQDHLNIH), and 381 to 404 (YKCHCCDMDFKHKSALKKHLTSVH).

It localises to the nucleus. Functionally, may be involved in transcriptional regulation. This is Zinc finger and BTB domain-containing protein 6 (Zbtb6) from Mus musculus (Mouse).